The following is a 267-amino-acid chain: Phosphate import ATP-binding protein PstB (267 aa).

One can recognise an ABC transporter domain in the interval 12–251 (VSLDNVSIRY…EFDKTKNMFN (240 aa)). Residue 44-51 (GPSGCGKS) participates in ATP binding.

This sequence belongs to the ABC transporter superfamily. Phosphate importer (TC 3.A.1.7) family. The complex is composed of two ATP-binding proteins (PstB), two transmembrane proteins (PstC and PstA) and a solute-binding protein (PstS).

The protein resides in the cell inner membrane. It catalyses the reaction phosphate(out) + ATP + H2O = ADP + 2 phosphate(in) + H(+). Its function is as follows. Part of the ABC transporter complex PstSACB involved in phosphate import. Responsible for energy coupling to the transport system. The polypeptide is Phosphate import ATP-binding protein PstB (Prochlorococcus marinus (strain NATL2A)).